The chain runs to 450 residues: tRNA-2-methylthio-N(6)-dimethylallyladenosine synthase (450 aa).

In terms of domain architecture, MTTase N-terminal spans 8–124; it reads RTLHITTWGC…LPELIAEIEA (117 aa). 6 residues coordinate [4Fe-4S] cluster: Cys-17, Cys-52, Cys-87, Cys-162, Cys-166, and Cys-169. A Radical SAM core domain is found at 148–380; the sequence is ASQGPIAFLA…QAVLRDQQHA (233 aa). Residues 383–445 form the TRAM domain; it reads RAQVGRSFEV…PNSLMASLTQ (63 aa).

This sequence belongs to the methylthiotransferase family. MiaB subfamily. In terms of assembly, monomer. It depends on [4Fe-4S] cluster as a cofactor.

It localises to the cytoplasm. The catalysed reaction is N(6)-dimethylallyladenosine(37) in tRNA + (sulfur carrier)-SH + AH2 + 2 S-adenosyl-L-methionine = 2-methylsulfanyl-N(6)-dimethylallyladenosine(37) in tRNA + (sulfur carrier)-H + 5'-deoxyadenosine + L-methionine + A + S-adenosyl-L-homocysteine + 2 H(+). In terms of biological role, catalyzes the methylthiolation of N6-(dimethylallyl)adenosine (i(6)A), leading to the formation of 2-methylthio-N6-(dimethylallyl)adenosine (ms(2)i(6)A) at position 37 in tRNAs that read codons beginning with uridine. This chain is tRNA-2-methylthio-N(6)-dimethylallyladenosine synthase, found in Acidiphilium cryptum (strain JF-5).